Reading from the N-terminus, the 235-residue chain is Ubiquinone biosynthesis O-methyltransferase (235 aa).

Residues R39, G59, D80, and M124 each contribute to the S-adenosyl-L-methionine site.

It belongs to the methyltransferase superfamily. UbiG/COQ3 family.

It catalyses the reaction a 3-demethylubiquinol + S-adenosyl-L-methionine = a ubiquinol + S-adenosyl-L-homocysteine + H(+). It carries out the reaction a 3-(all-trans-polyprenyl)benzene-1,2-diol + S-adenosyl-L-methionine = a 2-methoxy-6-(all-trans-polyprenyl)phenol + S-adenosyl-L-homocysteine + H(+). The protein operates within cofactor biosynthesis; ubiquinone biosynthesis. In terms of biological role, O-methyltransferase that catalyzes the 2 O-methylation steps in the ubiquinone biosynthetic pathway. In Vibrio vulnificus (strain CMCP6), this protein is Ubiquinone biosynthesis O-methyltransferase.